The primary structure comprises 188 residues: Elongation factor P (188 aa).

It belongs to the elongation factor P family.

The protein resides in the cytoplasm. Its pathway is protein biosynthesis; polypeptide chain elongation. Its function is as follows. Involved in peptide bond synthesis. Stimulates efficient translation and peptide-bond synthesis on native or reconstituted 70S ribosomes in vitro. Probably functions indirectly by altering the affinity of the ribosome for aminoacyl-tRNA, thus increasing their reactivity as acceptors for peptidyl transferase. In Chlorobium limicola (strain DSM 245 / NBRC 103803 / 6330), this protein is Elongation factor P.